Here is a 239-residue protein sequence, read N- to C-terminus: 1-(5-phosphoribosyl)-5-[(5-phosphoribosylamino)methylideneamino] imidazole-4-carboxamide isomerase (239 aa).

Asp8 serves as the catalytic Proton acceptor. Asp129 functions as the Proton donor in the catalytic mechanism.

Belongs to the HisA/HisF family.

The protein resides in the cytoplasm. It catalyses the reaction 1-(5-phospho-beta-D-ribosyl)-5-[(5-phospho-beta-D-ribosylamino)methylideneamino]imidazole-4-carboxamide = 5-[(5-phospho-1-deoxy-D-ribulos-1-ylimino)methylamino]-1-(5-phospho-beta-D-ribosyl)imidazole-4-carboxamide. Its pathway is amino-acid biosynthesis; L-histidine biosynthesis; L-histidine from 5-phospho-alpha-D-ribose 1-diphosphate: step 4/9. The sequence is that of 1-(5-phosphoribosyl)-5-[(5-phosphoribosylamino)methylideneamino] imidazole-4-carboxamide isomerase from Roseobacter denitrificans (strain ATCC 33942 / OCh 114) (Erythrobacter sp. (strain OCh 114)).